The primary structure comprises 622 residues: 1,4-alpha-glucan branching enzyme GlgB (622 aa).

D306 acts as the Nucleophile in catalysis. The Proton donor role is filled by E358. The tract at residues Y581 to L606 is disordered.

The protein belongs to the glycosyl hydrolase 13 family. GlgB subfamily. Monomer.

The enzyme catalyses Transfers a segment of a (1-&gt;4)-alpha-D-glucan chain to a primary hydroxy group in a similar glucan chain.. It participates in glycan biosynthesis; glycogen biosynthesis. Catalyzes the formation of the alpha-1,6-glucosidic linkages in glycogen by scission of a 1,4-alpha-linked oligosaccharide from growing alpha-1,4-glucan chains and the subsequent attachment of the oligosaccharide to the alpha-1,6 position. This Salinibacter ruber (strain DSM 13855 / M31) protein is 1,4-alpha-glucan branching enzyme GlgB.